We begin with the raw amino-acid sequence, 184 residues long: Large ribosomal subunit protein uL15 (184 aa).

The disordered stretch occupies residues 1-50 (MDLSSLRPAKGAVKNKKRVGRGQGSGNGTTAGKGNKGQQARSGYKRPINE). Over residues 21–35 (RGQGSGNGTTAGKGN) the composition is skewed to gly residues.

Belongs to the universal ribosomal protein uL15 family. In terms of assembly, part of the 50S ribosomal subunit.

Its function is as follows. Binds to the 23S rRNA. The protein is Large ribosomal subunit protein uL15 of Chlorobium luteolum (strain DSM 273 / BCRC 81028 / 2530) (Pelodictyon luteolum).